A 192-amino-acid polypeptide reads, in one-letter code: 7-methyl-GTP pyrophosphatase (192 aa).

Asp-69 acts as the Proton acceptor in catalysis.

This sequence belongs to the Maf family. YceF subfamily. A divalent metal cation is required as a cofactor.

Its subcellular location is the cytoplasm. The catalysed reaction is N(7)-methyl-GTP + H2O = N(7)-methyl-GMP + diphosphate + H(+). Functionally, nucleoside triphosphate pyrophosphatase that hydrolyzes 7-methyl-GTP (m(7)GTP). May have a dual role in cell division arrest and in preventing the incorporation of modified nucleotides into cellular nucleic acids. The chain is 7-methyl-GTP pyrophosphatase from Pseudomonas fluorescens (strain Pf0-1).